We begin with the raw amino-acid sequence, 342 residues long: DNA primase small subunit PriS (342 aa).

Active-site residues include Asp97, Asp99, and Asp236.

It belongs to the eukaryotic-type primase small subunit family. As to quaternary structure, heterodimer of a small subunit (PriS) and a large subunit (PriL). Requires Mg(2+) as cofactor. It depends on Mn(2+) as a cofactor.

Functionally, catalytic subunit of DNA primase, an RNA polymerase that catalyzes the synthesis of short RNA molecules used as primers for DNA polymerase during DNA replication. The small subunit contains the primase catalytic core and has DNA synthesis activity on its own. Binding to the large subunit stabilizes and modulates the activity, increasing the rate of DNA synthesis while decreasing the length of the DNA fragments, and conferring RNA synthesis capability. The DNA polymerase activity may enable DNA primase to also catalyze primer extension after primer synthesis. May also play a role in DNA repair. The polypeptide is DNA primase small subunit PriS (Aeropyrum pernix (strain ATCC 700893 / DSM 11879 / JCM 9820 / NBRC 100138 / K1)).